Consider the following 397-residue polypeptide: Carbamoyl phosphate synthase small chain (397 aa).

The segment at 1 to 204 (MKHVLRKEKT…NAKLKEKIWH (204 aa)) is CPSase. The L-glutamine site is built by serine 57, glycine 252, and glycine 254. One can recognise a Glutamine amidotransferase type-1 domain in the interval 204–391 (HVVVYDFGVK…IKLMKKSYNS (188 aa)). Cysteine 280 (nucleophile) is an active-site residue. 4 residues coordinate L-glutamine: leucine 281, glutamine 284, asparagine 322, and tyrosine 325. Catalysis depends on residues histidine 364 and glutamate 366.

The protein belongs to the CarA family. In terms of assembly, composed of two chains; the small (or glutamine) chain promotes the hydrolysis of glutamine to ammonia, which is used by the large (or ammonia) chain to synthesize carbamoyl phosphate. Tetramer of heterodimers (alpha,beta)4.

It catalyses the reaction hydrogencarbonate + L-glutamine + 2 ATP + H2O = carbamoyl phosphate + L-glutamate + 2 ADP + phosphate + 2 H(+). The catalysed reaction is L-glutamine + H2O = L-glutamate + NH4(+). The protein operates within amino-acid biosynthesis; L-arginine biosynthesis; carbamoyl phosphate from bicarbonate: step 1/1. Its pathway is pyrimidine metabolism; UMP biosynthesis via de novo pathway; (S)-dihydroorotate from bicarbonate: step 1/3. In terms of biological role, small subunit of the glutamine-dependent carbamoyl phosphate synthetase (CPSase). CPSase catalyzes the formation of carbamoyl phosphate from the ammonia moiety of glutamine, carbonate, and phosphate donated by ATP, constituting the first step of 2 biosynthetic pathways, one leading to arginine and/or urea and the other to pyrimidine nucleotides. The small subunit (glutamine amidotransferase) binds and cleaves glutamine to supply the large subunit with the substrate ammonia. The polypeptide is Carbamoyl phosphate synthase small chain (Buchnera aphidicola subsp. Baizongia pistaciae (strain Bp)).